Here is a 149-residue protein sequence, read N- to C-terminus: Transcriptional repressor NrdR (149 aa).

Residues 3 to 33 fold into a zinc finger; the sequence is CPFCSSEDTKVVDSRTTIDGSTKRRRECNNC. The ATP-cone domain maps to 48–138; sequence IYVVKKDNRR…VYKEFDDIKS (91 aa).

This sequence belongs to the NrdR family. It depends on Zn(2+) as a cofactor.

In terms of biological role, negatively regulates transcription of bacterial ribonucleotide reductase nrd genes and operons by binding to NrdR-boxes. The sequence is that of Transcriptional repressor NrdR from Fusobacterium nucleatum subsp. nucleatum (strain ATCC 25586 / DSM 15643 / BCRC 10681 / CIP 101130 / JCM 8532 / KCTC 2640 / LMG 13131 / VPI 4355).